Here is a 92-residue protein sequence, read N- to C-terminus: Elongation factor 1-beta (92 aa).

Belongs to the EF-1-beta/EF-1-delta family.

Functionally, promotes the exchange of GDP for GTP in EF-1-alpha/GDP, thus allowing the regeneration of EF-1-alpha/GTP that could then be used to form the ternary complex EF-1-alpha/GTP/AAtRNA. The polypeptide is Elongation factor 1-beta (Pyrobaculum neutrophilum (strain DSM 2338 / JCM 9278 / NBRC 100436 / V24Sta) (Thermoproteus neutrophilus)).